A 1116-amino-acid polypeptide reads, in one-letter code: Protein translocase subunit SecA (1116 aa).

ATP contacts are provided by residues Q176, 194-198, and D693; that span reads GEGKT.

Belongs to the SecA family. Monomer and homodimer. Part of the essential Sec protein translocation apparatus which comprises SecA, SecYEG and auxiliary proteins SecDF. Other proteins may also be involved.

It is found in the cell inner membrane. The protein resides in the cytoplasm. The catalysed reaction is ATP + H2O + cellular proteinSide 1 = ADP + phosphate + cellular proteinSide 2.. Functionally, part of the Sec protein translocase complex. Interacts with the SecYEG preprotein conducting channel. Has a central role in coupling the hydrolysis of ATP to the transfer of proteins into and across the cell membrane, serving as an ATP-driven molecular motor driving the stepwise translocation of polypeptide chains across the membrane. This is Protein translocase subunit SecA from Amoebophilus asiaticus (strain 5a2).